The chain runs to 453 residues: Na(+)/H(+) antiporter NhaA 2 (453 aa).

Transmembrane regions (helical) follow at residues 23-43, 74-94, 111-131, 139-159, 168-188, 191-211, 214-234, 235-255, 316-336, 345-365, 386-406, and 419-439; these read FLHI…AALI, LHFW…GMEI, LPMA…LSFG, GWAV…ALLG, VFLL…IAFF, GGLD…VIGL, IGVG…LGIL, LTGA…PVTA, VAFG…LSGV, WVMI…IVSV, IVLV…IANL, and LGVL…GVWS.

Belongs to the NhaA Na(+)/H(+) (TC 2.A.33) antiporter family.

It localises to the cell inner membrane. It catalyses the reaction Na(+)(in) + 2 H(+)(out) = Na(+)(out) + 2 H(+)(in). Na(+)/H(+) antiporter that extrudes sodium in exchange for external protons. In Pseudomonas putida (strain ATCC 700007 / DSM 6899 / JCM 31910 / BCRC 17059 / LMG 24140 / F1), this protein is Na(+)/H(+) antiporter NhaA 2.